A 428-amino-acid chain; its full sequence is CinA-like protein (428 aa).

This sequence belongs to the CinA family.

The sequence is that of CinA-like protein from Chlorobium phaeovibrioides (strain DSM 265 / 1930) (Prosthecochloris vibrioformis (strain DSM 265)).